Reading from the N-terminus, the 492-residue chain is GTPase Der (492 aa).

EngA-type G domains lie at 3–167 and 188–363; these read PVVA…PAPE and ICIA…AQYA. GTP contacts are provided by residues 9-16, 56-60, 119-122, 194-201, 241-245, and 306-309; these read GRPNVGKS, DTGGF, NKVE, DTAGI, and NKWD. Residues 364–448 enclose the KH-like domain; sequence YRINTGLLNR…PIRLLFRAKT (85 aa). The interval 464–492 is disordered; sequence VEKKEKKTTRRKKERKEQSRRKRVRDLKG. Basic residues predominate over residues 469–492; sequence KKTTRRKKERKEQSRRKRVRDLKG.

Belongs to the TRAFAC class TrmE-Era-EngA-EngB-Septin-like GTPase superfamily. EngA (Der) GTPase family. As to quaternary structure, associates with the 50S ribosomal subunit.

In terms of biological role, GTPase that plays an essential role in the late steps of ribosome biogenesis. This chain is GTPase Der, found in Desulforapulum autotrophicum (strain ATCC 43914 / DSM 3382 / VKM B-1955 / HRM2) (Desulfobacterium autotrophicum).